The following is a 376-amino-acid chain: Chaperone protein DnaJ (376 aa).

Positions 5–72 constitute a J domain; the sequence is DFYEVLGVPK…QKRAAYDQYG (68 aa). A CR-type zinc finger spans residues 136-214; that stretch reads GKEAQIRIPS…CHGQGRVKKQ (79 aa). Residues cysteine 149, cysteine 152, cysteine 166, cysteine 169, cysteine 188, cysteine 191, cysteine 202, and cysteine 205 each coordinate Zn(2+). 4 CXXCXGXG motif repeats span residues 149-156, 166-173, 188-195, and 202-209; these read CETCHGSG, CGTCQGSG, CPHCRGTG, and CTACHGQG. Disordered regions lie at residues 227–246 and 352–376; these read DGMR…GGPP and SLKK…SFFS. The segment covering 237 to 246 has biased composition (gly residues); it reads GEPGTNGGPP. A compositionally biased stretch (basic and acidic residues) spans 367–376; the sequence is WTDRLKSFFS.

It belongs to the DnaJ family. Homodimer. Zn(2+) is required as a cofactor.

It is found in the cytoplasm. Participates actively in the response to hyperosmotic and heat shock by preventing the aggregation of stress-denatured proteins and by disaggregating proteins, also in an autonomous, DnaK-independent fashion. Unfolded proteins bind initially to DnaJ; upon interaction with the DnaJ-bound protein, DnaK hydrolyzes its bound ATP, resulting in the formation of a stable complex. GrpE releases ADP from DnaK; ATP binding to DnaK triggers the release of the substrate protein, thus completing the reaction cycle. Several rounds of ATP-dependent interactions between DnaJ, DnaK and GrpE are required for fully efficient folding. Also involved, together with DnaK and GrpE, in the DNA replication of plasmids through activation of initiation proteins. This chain is Chaperone protein DnaJ, found in Acidovorax sp. (strain JS42).